The following is a 282-amino-acid chain: Proteasome subunit beta (282 aa).

Residues 1–55 constitute a propeptide, removed in mature form; by autocatalysis; sequence MDNSSTGRYPAASLPPAYLRPGSSSFTDFLRAQAPELLPTARSFPEGSVVQAAHG. Threonine 56 (nucleophile) is an active-site residue.

It belongs to the peptidase T1B family. In terms of assembly, the 20S proteasome core is composed of 14 alpha and 14 beta subunits that assemble into four stacked heptameric rings, resulting in a barrel-shaped structure. The two inner rings, each composed of seven catalytic beta subunits, are sandwiched by two outer rings, each composed of seven alpha subunits. The catalytic chamber with the active sites is on the inside of the barrel. Has a gated structure, the ends of the cylinder being occluded by the N-termini of the alpha-subunits. Is capped by the proteasome-associated ATPase, ARC.

The protein localises to the cytoplasm. The catalysed reaction is Cleavage of peptide bonds with very broad specificity.. Its pathway is protein degradation; proteasomal Pup-dependent pathway. The formation of the proteasomal ATPase ARC-20S proteasome complex, likely via the docking of the C-termini of ARC into the intersubunit pockets in the alpha-rings, may trigger opening of the gate for substrate entry. Interconversion between the open-gate and close-gate conformations leads to a dynamic regulation of the 20S proteasome proteolysis activity. Its function is as follows. Component of the proteasome core, a large protease complex with broad specificity involved in protein degradation. This is Proteasome subunit beta from Actinosynnema mirum (strain ATCC 29888 / DSM 43827 / JCM 3225 / NBRC 14064 / NCIMB 13271 / NRRL B-12336 / IMRU 3971 / 101).